Reading from the N-terminus, the 114-residue chain is MSKSLGELGERIIGQYLEKKGYRLIETNYRTKLGEIDIIAYKGTIIAFVEVKTRRSQSYGMPCEAVNWQKQQRLHRVASHYIARKGLINYDFRFDVAEVIIGKEKKIHYINNAF.

The protein belongs to the UPF0102 family.

In Alkaliphilus metalliredigens (strain QYMF), this protein is UPF0102 protein Amet_2739.